A 102-amino-acid polypeptide reads, in one-letter code: Small ribosomal subunit protein uS10 (102 aa).

Belongs to the universal ribosomal protein uS10 family. In terms of assembly, part of the 30S ribosomal subunit.

Functionally, involved in the binding of tRNA to the ribosomes. In Clavibacter michiganensis subsp. michiganensis (strain NCPPB 382), this protein is Small ribosomal subunit protein uS10.